Consider the following 206-residue polypeptide: Guanylate kinase (206 aa).

A Guanylate kinase-like domain is found at 5-184 (GMLIVLSGPS…AAERIKAIIR (180 aa)). 12-19 (GPSGVGKG) contacts ATP.

It belongs to the guanylate kinase family.

Its subcellular location is the cytoplasm. It catalyses the reaction GMP + ATP = GDP + ADP. Its function is as follows. Essential for recycling GMP and indirectly, cGMP. The protein is Guanylate kinase of Lactiplantibacillus plantarum (strain ATCC BAA-793 / NCIMB 8826 / WCFS1) (Lactobacillus plantarum).